The chain runs to 263 residues: tRNA uridine(34) hydroxylase (263 aa).

Positions 129-223 (EGREIALLDT…YFEEVGGAHY (95 aa)) constitute a Rhodanese domain. The active-site Cysteine persulfide intermediate is Cys183.

The protein belongs to the TrhO family.

It carries out the reaction uridine(34) in tRNA + AH2 + O2 = 5-hydroxyuridine(34) in tRNA + A + H2O. Functionally, catalyzes oxygen-dependent 5-hydroxyuridine (ho5U) modification at position 34 in tRNAs. The chain is tRNA uridine(34) hydroxylase from Variovorax paradoxus (strain S110).